Consider the following 127-residue polypeptide: Large ribosomal subunit protein bL19 (127 aa).

Belongs to the bacterial ribosomal protein bL19 family.

Its function is as follows. This protein is located at the 30S-50S ribosomal subunit interface and may play a role in the structure and function of the aminoacyl-tRNA binding site. The protein is Large ribosomal subunit protein bL19 of Cupriavidus pinatubonensis (strain JMP 134 / LMG 1197) (Cupriavidus necator (strain JMP 134)).